An 840-amino-acid polypeptide reads, in one-letter code: Leucine-zipper-like transcriptional regulator 1 (840 aa).

The residue at position 2 (Ala2) is an N-acetylalanine. Kelch repeat units lie at residues 79 to 128, 130 to 185, 187 to 238, 239 to 285, 295 to 341, and 399 to 450; these read AIYV…VYGS, MFVF…VYSD, LWIF…VCRD, KMFV…QRRY, HLYV…PERA, and AMYI…FVLG. BTB domains lie at 443–537 and 667–736; these read CDVE…KYPR and CDIT…NMPP.

The protein belongs to the LZTR1 family. Homodimer. Component of the BCR(LZTR1) E3 ubiquitin ligase complex, at least composed of CUL3, LZTR1 and RBX1. Interacts with Ras (K-Ras/KRAS, N-Ras/NRAS and H-Ras/HRAS). Interacts with RAF1. Interacts with SHOC2. Interacts with PPP1CB. Phosphorylated on tyrosine upon induction of apoptosis, leading to its degradation by the proteasome.

It localises to the endomembrane system. The protein localises to the recycling endosome. The protein resides in the golgi apparatus. Its pathway is protein modification; protein ubiquitination. Functionally, substrate-specific adapter of a BCR (BTB-CUL3-RBX1) E3 ubiquitin-protein ligase complex that mediates ubiquitination of Ras (K-Ras/KRAS, N-Ras/NRAS and H-Ras/HRAS). Is a negative regulator of RAS-MAPK signaling that acts by controlling Ras levels and decreasing Ras association with membranes. This is Leucine-zipper-like transcriptional regulator 1 from Homo sapiens (Human).